The chain runs to 191 residues: Glutathione-independent glyoxalase DJ-1 (191 aa).

Catalysis depends on residues glutamate 16, cysteine 111, and histidine 130.

The protein belongs to the peptidase C56 family.

Its subcellular location is the cytoplasm. The protein localises to the nucleus. The enzyme catalyses methylglyoxal + H2O = (R)-lactate + H(+). Functionally, catalyzes the conversion of methylglyoxal (MG) to D-lactate in a single glutathione (GSH)-independent step. May play a role in detoxifying endogenously produced glyoxals. Involved in protection against reactive oxygen species (ROS). This is Glutathione-independent glyoxalase DJ-1 from Schizosaccharomyces pombe (strain 972 / ATCC 24843) (Fission yeast).